A 97-amino-acid chain; its full sequence is MNIRPLHDRVIVKRKEVESKSAGGIVLTGSAAGKSTRGEVLAIGHGRILENGEVKPLDVKVGDIVIFNDGYGVKAEKIDNEEVLIMSESDILAIVEA.

This sequence belongs to the GroES chaperonin family. In terms of assembly, heptamer of 7 subunits arranged in a ring. Interacts with the chaperonin GroEL.

It localises to the cytoplasm. Functionally, together with the chaperonin GroEL, plays an essential role in assisting protein folding. The GroEL-GroES system forms a nano-cage that allows encapsulation of the non-native substrate proteins and provides a physical environment optimized to promote and accelerate protein folding. GroES binds to the apical surface of the GroEL ring, thereby capping the opening of the GroEL channel. In Pectobacterium atrosepticum (strain SCRI 1043 / ATCC BAA-672) (Erwinia carotovora subsp. atroseptica), this protein is Co-chaperonin GroES.